We begin with the raw amino-acid sequence, 51 residues long: Insulin (51 aa).

3 disulfides stabilise this stretch: Cys7/Cys37, Cys19/Cys50, and Cys36/Cys41.

This sequence belongs to the insulin family. As to quaternary structure, heterodimer of a B chain and an A chain linked by two disulfide bonds.

The protein localises to the secreted. Functionally, insulin decreases blood glucose concentration. It increases cell permeability to monosaccharides, amino acids and fatty acids. It accelerates glycolysis, the pentose phosphate cycle, and glycogen synthesis in liver. In Balaenoptera physalus (Fin whale), this protein is Insulin (INS).